The sequence spans 163 residues: HTH-type transcriptional regulator IscR (163 aa).

Residues 2 to 131 (RLTSKGRYAV…NNITLGELVN (130 aa)) form the HTH rrf2-type domain. The segment at residues 28–51 (LADISERQGISLSYLEQLFSRLRK) is a DNA-binding region (H-T-H motif). 3 residues coordinate [2Fe-2S] cluster: Cys-92, Cys-98, and Cys-104.

It depends on [2Fe-2S] cluster as a cofactor.

Regulates the transcription of several operons and genes involved in the biogenesis of Fe-S clusters and Fe-S-containing proteins. The sequence is that of HTH-type transcriptional regulator IscR from Klebsiella pneumoniae subsp. pneumoniae (strain ATCC 700721 / MGH 78578).